The primary structure comprises 194 residues: Adenylate kinase isoenzyme 1 (194 aa).

N-acetylalanine is present on alanine 2. 18 to 23 lines the ATP pocket; sequence GSGKGT. Positions 38–67 are NMP; sequence SSGDLLRAEVASGSERGKQLQAIMQKGELV. Residues serine 39, arginine 44, 65-67, 94-97, and glutamine 101 contribute to the AMP site; these read ELV and GYPR. The LID stretch occupies residues 131–141; sequence KRGQTSGRSDD. Residue arginine 132 coordinates ATP. Positions 138 and 149 each coordinate AMP. Residue leucine 177 coordinates ATP.

This sequence belongs to the adenylate kinase family. AK1 subfamily. As to quaternary structure, monomer. It depends on Mg(2+) as a cofactor.

Its subcellular location is the cytoplasm. The catalysed reaction is a ribonucleoside 5'-phosphate + ATP = a ribonucleoside 5'-diphosphate + ADP. It carries out the reaction AMP + ATP = 2 ADP. The enzyme catalyses dAMP + ATP = dADP + ADP. It catalyses the reaction dATP + AMP = dADP + ADP. The catalysed reaction is dAMP + dATP = 2 dADP. It carries out the reaction a 2'-deoxyribonucleoside 5'-diphosphate + ATP = a 2'-deoxyribonucleoside 5'-triphosphate + ADP. The enzyme catalyses a ribonucleoside 5'-diphosphate + ATP = a ribonucleoside 5'-triphosphate + ADP. It catalyses the reaction CDP + GTP = CTP + GDP. The catalysed reaction is GDP + ATP = GTP + ADP. It carries out the reaction UDP + ATP = UTP + ADP. The enzyme catalyses GTP + UDP = UTP + GDP. It catalyses the reaction dTDP + GTP = dTTP + GDP. The catalysed reaction is dCDP + GTP = dCTP + GDP. It carries out the reaction dGDP + ATP = dGTP + ADP. The enzyme catalyses dADP + GTP = dATP + GDP. It catalyses the reaction thiamine diphosphate + ADP = thiamine triphosphate + AMP. In terms of biological role, catalyzes the reversible transfer of the terminal phosphate group between ATP and AMP. Also displays broad nucleoside diphosphate kinase activity. Plays an important role in cellular energy homeostasis and in adenine nucleotide metabolism. Also catalyzes at a very low rate the synthesis of thiamine triphosphate (ThTP) from thiamine diphosphate (ThDP) and ADP. This is Adenylate kinase isoenzyme 1 (ak1) from Cyprinus carpio (Common carp).